We begin with the raw amino-acid sequence, 232 residues long: Large ribosomal subunit protein uL1 (232 aa).

The protein belongs to the universal ribosomal protein uL1 family. As to quaternary structure, part of the 50S ribosomal subunit.

In terms of biological role, binds directly to 23S rRNA. The L1 stalk is quite mobile in the ribosome, and is involved in E site tRNA release. Functionally, protein L1 is also a translational repressor protein, it controls the translation of the L11 operon by binding to its mRNA. The protein is Large ribosomal subunit protein uL1 of Alkaliphilus metalliredigens (strain QYMF).